The following is a 399-amino-acid chain: Endo-1,4-beta-xylanase C (399 aa).

The N-terminal stretch at 1–20 is a signal peptide; the sequence is MFKFSASLAALAALVPFVAA. Residues 21–56 enclose the CBM1 domain; sequence QSPEWGQCGGIGWTGPTTCVAGTTCVESNPYYSQCL. One can recognise a GH10 domain in the interval 81–396; the sequence is SAKLHTLAKA…KPAFNGIAAG (316 aa). The active-site Proton donor is glutamate 212. The active-site Nucleophile is glutamate 318. An intrachain disulfide couples cysteine 346 to cysteine 352.

This sequence belongs to the glycosyl hydrolase 10 (cellulase F) family.

The protein resides in the secreted. It carries out the reaction Endohydrolysis of (1-&gt;4)-beta-D-xylosidic linkages in xylans.. The protein operates within glycan degradation; xylan degradation. Functionally, endo-1,4-beta-xylanase involved in the hydrolysis of xylan, a major structural heterogeneous polysaccharide found in plant biomass representing the second most abundant polysaccharide in the biosphere, after cellulose. This Phanerodontia chrysosporium (White-rot fungus) protein is Endo-1,4-beta-xylanase C (xynC).